The sequence spans 572 residues: Acyl-coenzyme A synthetase ACSM2, mitochondrial (572 aa).

The transit peptide at 1–46 (MHWLWKIPRLCTFWGTEMFHRTFHMNIKKLMPIQWGHQEVPAKFNF) directs the protein to the mitochondrion. Gln-139 contacts CoA. Residues 221–229 (TSGTSGPPK), 359–364 (EIYGQT), Asp-446, and Arg-461 each bind ATP. Substrate is bound at residue Thr-364. 469-471 (SGY) is a binding site for CoA. Arg-472 is a binding site for substrate. CoA-binding positions include Arg-501, Lys-532, and 540-542 (YPR). Lys-557 provides a ligand contact to ATP.

The protein belongs to the ATP-dependent AMP-binding enzyme family. Monomer. Requires Mg(2+) as cofactor. It depends on Mn(2+) as a cofactor. As to expression, detected in kidney, in proximal tubules.

The protein localises to the mitochondrion. It carries out the reaction a medium-chain fatty acid + ATP + CoA = a medium-chain fatty acyl-CoA + AMP + diphosphate. It catalyses the reaction benzoate + ATP + CoA = benzoyl-CoA + AMP + diphosphate. The catalysed reaction is hexanoate + ATP + CoA = hexanoyl-CoA + AMP + diphosphate. The enzyme catalyses butanoate + ATP + CoA = butanoyl-CoA + AMP + diphosphate. It carries out the reaction octanoate + ATP + CoA = octanoyl-CoA + AMP + diphosphate. It catalyses the reaction decanoate + ATP + CoA = decanoyl-CoA + AMP + diphosphate. Catalyzes the activation of fatty acids by CoA to produce an acyl-CoA, the first step in fatty acid metabolism. Capable of activating medium-chain fatty acids (e.g. butyric (C4) to decanoic (C10) acids), and certain carboxylate-containing xenobiotics, e.g. benzoate. In Rattus norvegicus (Rat), this protein is Acyl-coenzyme A synthetase ACSM2, mitochondrial (Acsm2).